The primary structure comprises 449 residues: uncharacterized protein (449 aa).

Acidic residues predominate over residues 1 to 11 (MLDAPEQDPVD). The interval 1-33 (MLDAPEQDPVDPGDPASPPHGEAEQPLPGPRWP) is disordered. A helical transmembrane segment spans residues 45-65 (LLLTALGGLLIAGLVTAIPAV). The interval 349-449 (QPPVPPPDIP…PGPAEPAPAG (101 aa)) is disordered. Pro residues predominate over residues 365 to 387 (PPIPLQLPTPRPAPPAQQLPSTP). The segment covering 409–418 (HAPASAAPAE) has biased composition (low complexity). Over residues 437–449 (ATPPGPAEPAPAG) the composition is skewed to pro residues.

Its subcellular location is the cell membrane. The protein localises to the secreted. Its function is as follows. May play a role in septum formation. This is an uncharacterized protein from Mycobacterium tuberculosis (strain CDC 1551 / Oshkosh).